The chain runs to 910 residues: UPF0182 protein Acid_6445 (910 aa).

Helical transmembrane passes span 17-37 (ITLLAILLFLLFGLRSFAGYA), 56-76 (LYYGIAPVAVATLVAFLALWI), 101-121 (LALLFLAWFIAAGAIDTWTVV), 157-177 (LLRSYVLAVIIFCVLLYWIAA), 210-229 (FLRGAAVIGLIALAVRFYLG), 252-272 (IGLPLQWLVIFACLAAAAFVA), and 276-296 (WFLAALMALALVVDFAAPRIV).

The protein belongs to the UPF0182 family.

The protein localises to the cell membrane. This is UPF0182 protein Acid_6445 from Solibacter usitatus (strain Ellin6076).